A 500-amino-acid polypeptide reads, in one-letter code: Lysine--tRNA ligase (500 aa).

Mg(2+) is bound by residues glutamate 410 and glutamate 417.

This sequence belongs to the class-II aminoacyl-tRNA synthetase family. In terms of assembly, homodimer. Mg(2+) is required as a cofactor.

The protein resides in the cytoplasm. It catalyses the reaction tRNA(Lys) + L-lysine + ATP = L-lysyl-tRNA(Lys) + AMP + diphosphate. The sequence is that of Lysine--tRNA ligase from Pseudomonas syringae pv. syringae (strain B728a).